Consider the following 413-residue polypeptide: Glutamyl-tRNA reductase (413 aa).

Residues 57–60 (TCNR), serine 113, 118–120 (DFE), and glutamine 124 each bind substrate. Cysteine 58 (nucleophile) is an active-site residue. An NADP(+)-binding site is contributed by 193–198 (GTGKIG).

This sequence belongs to the glutamyl-tRNA reductase family. In terms of assembly, homodimer.

It catalyses the reaction (S)-4-amino-5-oxopentanoate + tRNA(Glu) + NADP(+) = L-glutamyl-tRNA(Glu) + NADPH + H(+). The protein operates within porphyrin-containing compound metabolism; protoporphyrin-IX biosynthesis; 5-aminolevulinate from L-glutamyl-tRNA(Glu): step 1/2. In terms of biological role, catalyzes the NADPH-dependent reduction of glutamyl-tRNA(Glu) to glutamate 1-semialdehyde (GSA). This is Glutamyl-tRNA reductase from Flavobacterium psychrophilum (strain ATCC 49511 / DSM 21280 / CIP 103535 / JIP02/86).